The chain runs to 78 residues: uncharacterized protein (78 aa).

This is an uncharacterized protein from Archaeoglobus fulgidus (strain ATCC 49558 / DSM 4304 / JCM 9628 / NBRC 100126 / VC-16).